The primary structure comprises 478 residues: NADH oxidase (478 aa).

Residues G8 to A12, D33, C43, V80, A111 to A114, K149, and Y177 each bind FAD. Residue H11 is the Proton acceptor of the active site. C43 (redox-active) is an active-site residue. C43 carries the cysteine sulfinic acid (-SO2H) modification. Residues V170–A185, D197, and G264 contribute to the NAD(+) site. FAD-binding positions include L295–G305, L322, A323, and T324. An NAD(+)-binding site is contributed by A353. Residue F450 participates in FAD binding.

Belongs to the class-III pyridine nucleotide-disulfide oxidoreductase family. FAD is required as a cofactor.

The enzyme catalyses 2 NADH + O2 + 2 H(+) = 2 NAD(+) + 2 H2O. Catalyzes the four-electron reduction of molecular oxygen to water. The sequence is that of NADH oxidase (nox) from Mycoplasma genitalium (strain ATCC 33530 / DSM 19775 / NCTC 10195 / G37) (Mycoplasmoides genitalium).